The primary structure comprises 338 residues: RNA 3'-terminal phosphate cyclase (338 aa).

Residues Gln103 and 283 to 287 (YLADQ) contribute to the ATP site. Residue His308 is the Tele-AMP-histidine intermediate of the active site.

The protein belongs to the RNA 3'-terminal cyclase family. Type 1 subfamily.

It localises to the cytoplasm. It carries out the reaction a 3'-end 3'-phospho-ribonucleotide-RNA + ATP = a 3'-end 2',3'-cyclophospho-ribonucleotide-RNA + AMP + diphosphate. In terms of biological role, catalyzes the conversion of 3'-phosphate to a 2',3'-cyclic phosphodiester at the end of RNA. The mechanism of action of the enzyme occurs in 3 steps: (A) adenylation of the enzyme by ATP; (B) transfer of adenylate to an RNA-N3'P to produce RNA-N3'PP5'A; (C) and attack of the adjacent 2'-hydroxyl on the 3'-phosphorus in the diester linkage to produce the cyclic end product. The biological role of this enzyme is unknown but it is likely to function in some aspects of cellular RNA processing. The chain is RNA 3'-terminal phosphate cyclase from Escherichia coli O7:K1 (strain IAI39 / ExPEC).